We begin with the raw amino-acid sequence, 285 residues long: Bifunctional protein FolD (285 aa).

NADP(+) contacts are provided by residues 165-167 (GRG), threonine 192, and valine 233.

The protein belongs to the tetrahydrofolate dehydrogenase/cyclohydrolase family. In terms of assembly, homodimer.

It catalyses the reaction (6R)-5,10-methylene-5,6,7,8-tetrahydrofolate + NADP(+) = (6R)-5,10-methenyltetrahydrofolate + NADPH. It carries out the reaction (6R)-5,10-methenyltetrahydrofolate + H2O = (6R)-10-formyltetrahydrofolate + H(+). Its pathway is one-carbon metabolism; tetrahydrofolate interconversion. Catalyzes the oxidation of 5,10-methylenetetrahydrofolate to 5,10-methenyltetrahydrofolate and then the hydrolysis of 5,10-methenyltetrahydrofolate to 10-formyltetrahydrofolate. This chain is Bifunctional protein FolD, found in Mycobacterium sp. (strain MCS).